A 372-amino-acid polypeptide reads, in one-letter code: uncharacterized protein (372 aa).

A PNPLA domain is found at 38–270 (FFIEGGGTKG…ANNIPLDYLI (233 aa)). Residues 42–47 (GGGTKG) carry the GXGXXG motif. A GXSXG motif is present at residues 74–78 (GTSVG). Ser-76 (nucleophile) is an active-site residue. Catalysis depends on Asp-257, which acts as the Proton acceptor. The DGA/G signature appears at 257-259 (DGG).

Functionally, probable lipid hydrolase. This is an uncharacterized protein from Acanthamoeba polyphaga (Amoeba).